A 235-amino-acid chain; its full sequence is 7-cyano-7-deazaguanine synthase (235 aa).

Residue 10–20 (FSGGQDSTTCL) coordinates ATP. Zn(2+) contacts are provided by cysteine 198, cysteine 213, cysteine 216, and cysteine 219.

It belongs to the QueC family. The cofactor is Zn(2+).

The catalysed reaction is 7-carboxy-7-deazaguanine + NH4(+) + ATP = 7-cyano-7-deazaguanine + ADP + phosphate + H2O + H(+). Its pathway is purine metabolism; 7-cyano-7-deazaguanine biosynthesis. Catalyzes the ATP-dependent conversion of 7-carboxy-7-deazaguanine (CDG) to 7-cyano-7-deazaguanine (preQ(0)). In Paracidovorax citrulli (strain AAC00-1) (Acidovorax citrulli), this protein is 7-cyano-7-deazaguanine synthase.